A 455-amino-acid polypeptide reads, in one-letter code: MSKAHVVGLGKSGVAAARLLKREGWEVVLSDRNTSDTLLKQQQELAKEQITVELGYSLDFAGALPDLIVVSPGVPWDIPALVKARELGIETIGEMELAWRHLKSLPWVGITGTNGKTTTTALIAAIFQAAGFDAPACGNIGYAACEVALAATPPDWIIGEMSSYQIESSLTLAPHISIWTTFTPDHLARHKTLENYYDIKAKLLRQSHLQVFNGDDAYLSKIGASHWPDAYWTSVKGKDYLIGDKGFYIEDGWVVEQLQPNSSPQRIVAAEALRMVGAHNLQNLLMAVAAARLADIPPNAIDKAVREFPGVAHRLEHICTWQGIDFINDSKATNYDAAEVGLASVKSPVILIAGGEAKPGDDAAWLAKIQGQTSAVLLIGNAAPAFAQRLQEIGYSNYEIVETMEQAVRRSLDLAKHHQAPVVLLSPACASFDQYPNFEARGDHFRQLCLELVGS.

Position 112–118 (112–118) interacts with ATP; sequence GTNGKTT.

It belongs to the MurCDEF family.

The protein localises to the cytoplasm. The catalysed reaction is UDP-N-acetyl-alpha-D-muramoyl-L-alanine + D-glutamate + ATP = UDP-N-acetyl-alpha-D-muramoyl-L-alanyl-D-glutamate + ADP + phosphate + H(+). Its pathway is cell wall biogenesis; peptidoglycan biosynthesis. Cell wall formation. Catalyzes the addition of glutamate to the nucleotide precursor UDP-N-acetylmuramoyl-L-alanine (UMA). The polypeptide is UDP-N-acetylmuramoylalanine--D-glutamate ligase (Trichormus variabilis (strain ATCC 29413 / PCC 7937) (Anabaena variabilis)).